Here is a 390-residue protein sequence, read N- to C-terminus: Transforming growth factor beta-1 proprotein (390 aa).

The signal sequence occupies residues 1–29 (MPPSGLRLLPLLLPLLWLLVLTPGRPAAG). A straightjacket domain region spans residues 30–74 (LSTCKTIDMELVKRKRIEAIRGQILSKLRLASPPSQGEVPPGPLP). Residues 75–271 (EAVLALYNST…ATPLERAQHL (197 aa)) are arm domain. Asparagine 82, asparagine 136, and asparagine 176 each carry an N-linked (GlcNAc...) asparagine glycan. Positions 226-252 (DSRDNTLQVDINGLSSSRRGDLATIHG) are bowtie tail. Residues 244 to 246 (RGD) carry the Cell attachment site motif. 4 disulfides stabilise this stretch: cysteine 285–cysteine 294, cysteine 293–cysteine 356, cysteine 322–cysteine 387, and cysteine 326–cysteine 389.

Belongs to the TGF-beta family. Homodimer; disulfide-linked. Interacts with the serine proteases, HTRA1 and HTRA3: the interaction with either inhibits TGFB1-mediated signaling and the HTRA protease activity is required for this inhibition. May interact with THSD4; this interaction may lead to sequestration by FBN1 microfibril assembly and attenuation of TGFB signaling. Interacts with CD109, DPT and ASPN. Interacts with EFEMP2. Interacts with TSKU; the interaction contributes to regulation of the hair cycle. Interacts with TGFBR3. As to quaternary structure, homodimer; disulfide-linked. Interacts with transforming growth factor beta-1 (TGF-beta-1) chain; interaction is non-covalent and maintains TGF-beta-1 in a latent state; each latency-associated peptide (LAP) monomer interacts with TGF-beta-1 in the other monomer. Interacts with LTBP1; leading to regulation of TGF-beta-1 activation. Interacts with LRRC32/GARP; leading to regulation of TGF-beta-1 activation on the surface of activated regulatory T-cells (Tregs). Interacts with LRRC33/NRROS; leading to regulation of TGF-beta-1 activation in macrophages and microglia. Interacts (via cell attachment site) with integrins ITGAV and ITGB6 (ITGAV:ITGB6), leading to release of the active TGF-beta-1. Interacts with NREP; the interaction results in a decrease in TGFB1 autoinduction. Interacts with HSP90AB1; inhibits latent TGFB1 activation. In terms of assembly, homodimer; disulfide-linked. Interacts with TGF-beta receptors (TGFBR1 and TGFBR2), leading to signal transduction. Post-translationally, transforming growth factor beta-1 proprotein: The precursor proprotein is cleaved in the Golgi apparatus by FURIN to form Transforming growth factor beta-1 (TGF-beta-1) and Latency-associated peptide (LAP) chains, which remain non-covalently linked, rendering TGF-beta-1 inactive. In terms of processing, N-glycosylated. Deglycosylation leads to activation of Transforming growth factor beta-1 (TGF-beta-1); mechanisms triggering deglycosylation-driven activation of TGF-beta-1 are however unclear.

It is found in the secreted. The protein resides in the extracellular space. Its subcellular location is the extracellular matrix. Transforming growth factor beta-1 proprotein: Precursor of the Latency-associated peptide (LAP) and Transforming growth factor beta-1 (TGF-beta-1) chains, which constitute the regulatory and active subunit of TGF-beta-1, respectively. In terms of biological role, required to maintain the Transforming growth factor beta-1 (TGF-beta-1) chain in a latent state during storage in extracellular matrix. Associates non-covalently with TGF-beta-1 and regulates its activation via interaction with 'milieu molecules', such as LTBP1, LRRC32/GARP and LRRC33/NRROS, that control activation of TGF-beta-1. Interaction with LRRC33/NRROS regulates activation of TGF-beta-1 in macrophages and microglia. Interaction with LRRC32/GARP controls activation of TGF-beta-1 on the surface of activated regulatory T-cells (Tregs). Interaction with integrins (ITGAV:ITGB6 or ITGAV:ITGB8) results in distortion of the Latency-associated peptide chain and subsequent release of the active TGF-beta-1. Its function is as follows. Multifunctional protein that regulates the growth and differentiation of various cell types and is involved in various processes, such as normal development, immune function, microglia function and responses to neurodegeneration. Activation into mature form follows different steps: following cleavage of the proprotein in the Golgi apparatus, Latency-associated peptide (LAP) and Transforming growth factor beta-1 (TGF-beta-1) chains remain non-covalently linked rendering TGF-beta-1 inactive during storage in extracellular matrix. At the same time, LAP chain interacts with 'milieu molecules', such as LTBP1, LRRC32/GARP and LRRC33/NRROS that control activation of TGF-beta-1 and maintain it in a latent state during storage in extracellular milieus. TGF-beta-1 is released from LAP by integrins (ITGAV:ITGB6 or ITGAV:ITGB8): integrin-binding to LAP stabilizes an alternative conformation of the LAP bowtie tail and results in distortion of the LAP chain and subsequent release of the active TGF-beta-1. Once activated following release of LAP, TGF-beta-1 acts by binding to TGF-beta receptors (TGFBR1 and TGFBR2), which transduce signal. While expressed by many cells types, TGF-beta-1 only has a very localized range of action within cell environment thanks to fine regulation of its activation by Latency-associated peptide chain (LAP) and 'milieu molecules'. Plays an important role in bone remodeling: acts as a potent stimulator of osteoblastic bone formation, causing chemotaxis, proliferation and differentiation in committed osteoblasts. Can promote either T-helper 17 cells (Th17) or regulatory T-cells (Treg) lineage differentiation in a concentration-dependent manner. At high concentrations, leads to FOXP3-mediated suppression of RORC and down-regulation of IL-17 expression, favoring Treg cell development. At low concentrations in concert with IL-6 and IL-21, leads to expression of the IL-17 and IL-23 receptors, favoring differentiation to Th17 cells. Stimulates sustained production of collagen through the activation of CREB3L1 by regulated intramembrane proteolysis (RIP). Mediates SMAD2/3 activation by inducing its phosphorylation and subsequent translocation to the nucleus. Positively regulates odontoblastic differentiation in dental papilla cells, via promotion of IPO7-mediated translocation of phosphorylated SMAD2 to the nucleus and subsequent transcription of target genes. Can induce epithelial-to-mesenchymal transition (EMT) and cell migration in various cell types. In Mustela putorius furo (European domestic ferret), this protein is Transforming growth factor beta-1 proprotein (TGFB1).